We begin with the raw amino-acid sequence, 883 residues long: Phosphoenolpyruvate carboxylase (883 aa).

Active-site residues include His-138 and Lys-546.

The protein belongs to the PEPCase type 1 family. Mg(2+) is required as a cofactor.

The enzyme catalyses oxaloacetate + phosphate = phosphoenolpyruvate + hydrogencarbonate. In terms of biological role, forms oxaloacetate, a four-carbon dicarboxylic acid source for the tricarboxylic acid cycle. This Escherichia coli O81 (strain ED1a) protein is Phosphoenolpyruvate carboxylase.